The following is a 156-amino-acid chain: Small ribosomal subunit protein uS7c (156 aa).

Belongs to the universal ribosomal protein uS7 family. Part of the 30S ribosomal subunit.

Its subcellular location is the plastid. It is found in the chloroplast. In terms of biological role, one of the primary rRNA binding proteins, it binds directly to 16S rRNA where it nucleates assembly of the head domain of the 30S subunit. The sequence is that of Small ribosomal subunit protein uS7c (rps7) from Phaeodactylum tricornutum (strain CCAP 1055/1).